A 204-amino-acid chain; its full sequence is Cytochrome c biogenesis ATP-binding export protein CcmA (204 aa).

The region spanning 2–202 (LEIRNVTCIR…DSNELKKIRL (201 aa)) is the ABC transporter domain. 34–41 (GQNGAGKT) is a binding site for ATP.

It belongs to the ABC transporter superfamily. CcmA exporter (TC 3.A.1.107) family. As to quaternary structure, the complex is composed of two ATP-binding proteins (CcmA) and two transmembrane proteins (CcmB).

It is found in the cell inner membrane. The catalysed reaction is heme b(in) + ATP + H2O = heme b(out) + ADP + phosphate + H(+). Part of the ABC transporter complex CcmAB involved in the biogenesis of c-type cytochromes; once thought to export heme, this seems not to be the case, but its exact role is uncertain. Responsible for energy coupling to the transport system. The chain is Cytochrome c biogenesis ATP-binding export protein CcmA from Aliivibrio fischeri (strain ATCC 700601 / ES114) (Vibrio fischeri).